The following is a 443-amino-acid chain: Probable ribonuclease FAU-1 (443 aa).

Belongs to the FAU-1 family.

Functionally, probable RNase involved in rRNA stability through maturation and/or degradation of precursor rRNAs. Binds to RNA in loop regions with AU-rich sequences. This chain is Probable ribonuclease FAU-1, found in Pyrobaculum aerophilum (strain ATCC 51768 / DSM 7523 / JCM 9630 / CIP 104966 / NBRC 100827 / IM2).